The chain runs to 406 residues: Argininosuccinate synthase (406 aa).

ATP contacts are provided by residues 10–18 (AYSGGLDTS) and Ala-37. Residues Tyr-88 and Ser-93 each contribute to the L-citrulline site. Gly-118 contacts ATP. Residues Thr-120, Asn-124, and Asp-125 each coordinate L-aspartate. L-citrulline is bound at residue Asn-124. Residues Arg-128, Ser-179, Ser-188, Glu-264, and Tyr-276 each contribute to the L-citrulline site.

The protein belongs to the argininosuccinate synthase family. Type 1 subfamily. In terms of assembly, homotetramer.

It localises to the cytoplasm. It catalyses the reaction L-citrulline + L-aspartate + ATP = 2-(N(omega)-L-arginino)succinate + AMP + diphosphate + H(+). Its pathway is amino-acid biosynthesis; L-arginine biosynthesis; L-arginine from L-ornithine and carbamoyl phosphate: step 2/3. This chain is Argininosuccinate synthase, found in Azotobacter vinelandii (strain DJ / ATCC BAA-1303).